We begin with the raw amino-acid sequence, 140 residues long: Cytochrome c-type biogenesis protein CcmE (140 aa).

Topologically, residues 1-7 (MKRKHKR) are cytoplasmic. The chain crosses the membrane as a helical; Signal-anchor for type II membrane protein span at residues 8-28 (LLFVLASFCAAGCALLFILSE). Residues 29–140 (LRESVSFFYT…TAPKSSPEPK (112 aa)) lie on the Periplasmic side of the membrane. The heme site is built by His121 and Tyr125.

The protein belongs to the CcmE/CycJ family.

The protein resides in the cell inner membrane. Functionally, heme chaperone required for the biogenesis of c-type cytochromes. Transiently binds heme delivered by CcmC and transfers the heme to apo-cytochromes in a process facilitated by CcmF and CcmH. This Anaplasma marginale (strain St. Maries) protein is Cytochrome c-type biogenesis protein CcmE.